A 248-amino-acid chain; its full sequence is 14-3-3 protein homolog 2 (248 aa).

This sequence belongs to the 14-3-3 family.

In Echinococcus granulosus (Hydatid tapeworm), this protein is 14-3-3 protein homolog 2.